The sequence spans 435 residues: Methylenetetrahydrofolate--tRNA-(uracil-5-)-methyltransferase TrmFO (435 aa).

10 to 15 contributes to the FAD binding site; sequence GAGLAG.

It belongs to the MnmG family. TrmFO subfamily. FAD is required as a cofactor.

The protein localises to the cytoplasm. It carries out the reaction uridine(54) in tRNA + (6R)-5,10-methylene-5,6,7,8-tetrahydrofolate + NADH + H(+) = 5-methyluridine(54) in tRNA + (6S)-5,6,7,8-tetrahydrofolate + NAD(+). The catalysed reaction is uridine(54) in tRNA + (6R)-5,10-methylene-5,6,7,8-tetrahydrofolate + NADPH + H(+) = 5-methyluridine(54) in tRNA + (6S)-5,6,7,8-tetrahydrofolate + NADP(+). In terms of biological role, catalyzes the folate-dependent formation of 5-methyl-uridine at position 54 (M-5-U54) in all tRNAs. The polypeptide is Methylenetetrahydrofolate--tRNA-(uracil-5-)-methyltransferase TrmFO (Halalkalibacterium halodurans (strain ATCC BAA-125 / DSM 18197 / FERM 7344 / JCM 9153 / C-125) (Bacillus halodurans)).